The sequence spans 159 residues: Intron-encoded endonuclease ai4 (159 aa).

Belongs to the LAGLIDADG endonuclease family.

It localises to the mitochondrion. Mitochondrial DNA endonuclease involved in intron homing. This Dictyostelium discoideum (Social amoeba) protein is Intron-encoded endonuclease ai4 (ai4).